The primary structure comprises 332 residues: Anthranilate phosphoribosyltransferase (332 aa).

5-phospho-alpha-D-ribose 1-diphosphate is bound by residues G79, 82–83 (GD), S87, 89–92 (NIST), 107–115 (KHGNRSVSS), and S119. Anthranilate is bound at residue G79. S91 lines the Mg(2+) pocket. N110 is a binding site for anthranilate. R165 is a binding site for anthranilate. Residues D223 and E224 each contribute to the Mg(2+) site.

Belongs to the anthranilate phosphoribosyltransferase family. As to quaternary structure, homodimer. It depends on Mg(2+) as a cofactor.

It carries out the reaction N-(5-phospho-beta-D-ribosyl)anthranilate + diphosphate = 5-phospho-alpha-D-ribose 1-diphosphate + anthranilate. The protein operates within amino-acid biosynthesis; L-tryptophan biosynthesis; L-tryptophan from chorismate: step 2/5. Catalyzes the transfer of the phosphoribosyl group of 5-phosphorylribose-1-pyrophosphate (PRPP) to anthranilate to yield N-(5'-phosphoribosyl)-anthranilate (PRA). This chain is Anthranilate phosphoribosyltransferase, found in Yersinia pestis bv. Antiqua (strain Antiqua).